The chain runs to 285 residues: Putative alkaline ceramidase dcd3B (285 aa).

3 helical membrane passes run 34 to 54 (TFSS…MMSA), 77 to 97 (VLFS…YHAT), and 104 to 124 (LFDE…ILTI). Asn131 carries an N-linked (GlcNAc...) asparagine glycan. 4 helical membrane-spanning segments follow: residues 141–161 (RFLP…ITII), 166–186 (IILQ…SYMY), 200–220 (PKKF…SWLT), and 236–256 (LHAV…QFFI).

This sequence belongs to the alkaline ceramidase family.

Its subcellular location is the membrane. This Dictyostelium discoideum (Social amoeba) protein is Putative alkaline ceramidase dcd3B (dcd3B).